The chain runs to 320 residues: ATP-dependent 6-phosphofructokinase (320 aa).

Glycine 12 provides a ligand contact to ATP. An ADP-binding site is contributed by 22-26; sequence RGVVR. Residues 73–74 and 103–106 each bind ATP; these read RF and GDGS. Position 104 (aspartate 104) interacts with Mg(2+). 126–128 is a binding site for substrate; the sequence is TID. The Proton acceptor role is filled by aspartate 128. Arginine 155 is an ADP binding site. Substrate contacts are provided by residues arginine 163 and 170 to 172; that span reads MGR. ADP-binding positions include 186–188, lysine 212, and 214–216; these read GCE and KKH. Substrate-binding positions include glutamate 223, arginine 244, and 250–253; that span reads HIQR.

This sequence belongs to the phosphofructokinase type A (PFKA) family. ATP-dependent PFK group I subfamily. Prokaryotic clade 'B1' sub-subfamily. Homotetramer. It depends on Mg(2+) as a cofactor.

It localises to the cytoplasm. It catalyses the reaction beta-D-fructose 6-phosphate + ATP = beta-D-fructose 1,6-bisphosphate + ADP + H(+). The protein operates within carbohydrate degradation; glycolysis; D-glyceraldehyde 3-phosphate and glycerone phosphate from D-glucose: step 3/4. With respect to regulation, allosterically activated by ADP and other diphosphonucleosides, and allosterically inhibited by phosphoenolpyruvate. Its function is as follows. Catalyzes the phosphorylation of D-fructose 6-phosphate to fructose 1,6-bisphosphate by ATP, the first committing step of glycolysis. In Edwardsiella ictaluri (strain 93-146), this protein is ATP-dependent 6-phosphofructokinase.